An 849-amino-acid chain; its full sequence is Alanine--tRNA ligase (849 aa).

Positions 551, 555, 653, and 657 each coordinate Zn(2+).

It belongs to the class-II aminoacyl-tRNA synthetase family. It depends on Zn(2+) as a cofactor.

Its subcellular location is the cytoplasm. The enzyme catalyses tRNA(Ala) + L-alanine + ATP = L-alanyl-tRNA(Ala) + AMP + diphosphate. In terms of biological role, catalyzes the attachment of alanine to tRNA(Ala) in a two-step reaction: alanine is first activated by ATP to form Ala-AMP and then transferred to the acceptor end of tRNA(Ala). Also edits incorrectly charged Ser-tRNA(Ala) and Gly-tRNA(Ala) via its editing domain. The polypeptide is Alanine--tRNA ligase (Sulfurimonas denitrificans (strain ATCC 33889 / DSM 1251) (Thiomicrospira denitrificans (strain ATCC 33889 / DSM 1251))).